The primary structure comprises 404 residues: Ubiquitin-like modifier-activating enzyme 5 (404 aa).

Position 45 is a phosphoserine (S45). 5 residues coordinate ATP: G83, D104, K127, N150, and N184. Residues C226 and C229 each coordinate Zn(2+). The active-site Glycyl thioester intermediate is the C250. Residues C303 and C308 each coordinate Zn(2+). The UFM1-interacting sequence (UIS) motif lies at 334–346; it reads IIHEDNEWGIELV. Residues 347–377 are linker; it reads SEVSEEELKNFSGPVPDLPEGITVAYTIPKK. 2 positions are modified to phosphoserine: S358 and S393. A UFC1-binding sequence (UFC) motif is present at residues 389–404; that stretch reads DSGESLEDLMAKMKNM.

The protein belongs to the ubiquitin-activating E1 family. UBA5 subfamily. In terms of assembly, homodimer; homodimerization is required for UFM1 activation. Interacts (via UIS motif) with UFM1; binds UFM1 via a trans-binding mechanism in which UFM1 interacts with distinct sites in both subunits of the UBA5 homodimer. Interacts (via C-terminus) with UFC1. Interacts (via UIS motif) with GABARAPL2 and, with lower affinity, with GABARAP and GABARAPL1. In terms of tissue distribution, widely expressed.

It localises to the cytoplasm. The protein resides in the nucleus. The protein localises to the endoplasmic reticulum membrane. It is found in the golgi apparatus. Functionally, E1-like enzyme which specifically catalyzes the first step in ufmylation. Activates UFM1 by first adenylating its C-terminal glycine residue with ATP, and thereafter linking this residue to the side chain of a cysteine residue in E1, yielding a UFM1-E1 thioester and free AMP. Activates UFM1 via a trans-binding mechanism, in which UFM1 interacts with distinct sites in both subunits of the UBA5 homodimer. Trans-binding also promotes stabilization of the UBA5 homodimer, and enhances ATP-binding. Transfer of UFM1 from UBA5 to the E2-like enzyme UFC1 also takes place using a trans mechanism. Ufmylation plays a key role in various processes, such as ribosome recycling, response to DNA damage, interferon response or reticulophagy (also called ER-phagy). Ufmylation is essential for erythroid differentiation of both megakaryocytes and erythrocytes. This Homo sapiens (Human) protein is Ubiquitin-like modifier-activating enzyme 5.